The primary structure comprises 544 residues: Baeyer-Villiger monooxygenase (544 aa).

The FAD site is built by phenylalanine 27, glutamate 47, tryptophan 56, aspartate 67, tyrosine 73, and valine 119.

It belongs to the FAD-binding monooxygenase family. The cofactor is FAD.

Catalyzes a Baeyer-Villiger oxidation reaction, i.e. the insertion of an oxygen atom into a carbon-carbon bond adjacent to a carbonyl, which converts ketones to esters or lactones using NADPH as an electron donor. Besides cycloalkanones, can use cyclic alpha,beta-unsaturated ketones as substrates, leading to enol-lactones. Can also act on methylated cycloalkanones and methylated cycloalkenones with high enantioselectivity in some cases. The chain is Baeyer-Villiger monooxygenase from Parvibaculum lavamentivorans (strain DS-1 / DSM 13023 / NCIMB 13966).